Consider the following 181-residue polypeptide: Regulator of G-protein signaling 5 (181 aa).

The 117-residue stretch at 64 to 180 folds into the RGS domain; the sequence is SLDKLLQNNY…VRSEFYQEFI (117 aa).

Its subcellular location is the cytoplasm. It is found in the membrane. In terms of biological role, inhibits signal transduction by increasing the GTPase activity of G protein alpha subunits thereby driving them into their inactive GDP-bound form. Binds to G(i)-alpha and G(o)-alpha, but not to G(s)-alpha. The sequence is that of Regulator of G-protein signaling 5 (RGS5) from Bos taurus (Bovine).